The chain runs to 336 residues: Plant-specific TFIIB-related protein 2 (336 aa).

The TFIIB-type zinc finger occupies 2 to 34 (EEETCLDCKRPTIMVVDHSSGDTICSECGLVLE). Residues Cys-6, Cys-9, Cys-26, and Cys-29 each coordinate Zn(2+).

As to expression, specifically expressed in reproductive organs and seeds.

The protein resides in the nucleus. Functionally, plant-specific TFIIB-related protein involved in the regulation of endosperm proliferation during the syncytial phase of endosperm development. Does not contribute to RNA polymerase IV or V activities in reproductive tissues. The protein is Plant-specific TFIIB-related protein 2 of Arabidopsis thaliana (Mouse-ear cress).